The following is a 121-amino-acid chain: Dihydroneopterin aldolase (121 aa).

The substrate site is built by E25 and M114.

The protein belongs to the archaeal dihydroneopterin aldolase family. As to quaternary structure, homotetramer.

The catalysed reaction is 7,8-dihydroneopterin = 6-hydroxymethyl-7,8-dihydropterin + glycolaldehyde. It participates in cofactor biosynthesis; 5,6,7,8-tetrahydromethanopterin biosynthesis. In terms of biological role, catalyzes the conversion of 7,8-dihydroneopterin (H2Neo) to 6-hydroxymethyl-7,8-dihydropterin (6-HMD). This Methanocaldococcus jannaschii (strain ATCC 43067 / DSM 2661 / JAL-1 / JCM 10045 / NBRC 100440) (Methanococcus jannaschii) protein is Dihydroneopterin aldolase.